A 604-amino-acid polypeptide reads, in one-letter code: Uptake hydrogenase large subunit (604 aa).

Ni(2+) is bound by residues cysteine 76, cysteine 79, cysteine 583, and cysteine 586.

This sequence belongs to the [NiFe]/[NiFeSe] hydrogenase large subunit family. Heterodimer of a large and a small subunit. Requires Ni(2+) as cofactor.

It is found in the cell membrane. The enzyme catalyses H2 + A = AH2. Functionally, this enzyme recycles the H(2) produced by nitrogenase to increase the production of ATP and to protect nitrogenase against inhibition or damage by O(2) under carbon- or phosphate-limited conditions. This Afipia carboxidovorans (strain ATCC 49405 / DSM 1227 / KCTC 32145 / OM5) (Oligotropha carboxidovorans) protein is Uptake hydrogenase large subunit (hoxL).